The following is a 1943-amino-acid chain: Beta-L-arabinobiosidase (1943 aa).

The tat-type signal signal peptide spans 1-32; that stretch reads MHHSTRKRWLASIGAVAAVATLATGGAVTAQA. 2 consecutive F5/8 type C domains span residues 892–1049 and 1142–1302; these read TNVD…AYNT and SKEI…AYAI. The region spanning 1061–1157 is the PKD domain; that stretch reads TPQVDAYVSS…HGIPSDGTVN (97 aa). 3 FIVAR domains span residues 1678 to 1716, 1746 to 1790, and 1823 to 1864; these read ANGL…EQVA, DAAK…AAVQ, and QAKK…VDAA. The segment at 1875–1906 is disordered; it reads TKVEQKPGSQQPGVTDTDKDDKDNKGDRVPPT. The span at 1890–1902 shows a compositional bias: basic and acidic residues; the sequence is DTDKDDKDNKGDR. A helical membrane pass occupies residues 1908–1928; that stretch reads AAVSVVAAAAVLLTAAGVTIL.

It belongs to the glycosyl hydrolase 121 family. Predicted to be exported by the Tat system. The position of the signal peptide cleavage has not been experimentally proven.

It is found in the membrane. It catalyses the reaction 4-O-(beta-L-arabinofuranosyl-(1-&gt;2)-beta-L-arabinofuranosyl-(1-&gt;2)-beta-L-arabinofuranosyl)-(2S,4S)-4-hydroxyproline + H2O = 4-O-(beta-L-arabinofuranosyl)-(2S,4S)-4-hydroxyproline + beta-L-arabinofuranosyl-(1-&gt;2)-beta-L-arabinofuranose. Functionally, beta-L-arabinobiosidase that removes L-arabinofuranose-beta-1,2-L-arabinofuranose disaccharide from various substrates such as carrot extensin and potato lectin. Also acts on L-arabinofuranose (Ara)-beta-1,2-Ara-beta-1,2-Ara-beta-Hyp (Ara(3)-Hyp) but not on Ara-beta-1,3-Ara-beta-1,2-Ara-beta-1,2-Ara-beta--Hyp (Ara(4)-Hyp) or Ara-beta-1,2-Ara-beta-Hyp (Ara(2)-Hyp), suggesting a specificity for unmodified Ara(3)-Hyp substrate. In the presence of 1-alkanols, shows transglycosylation activity, retaining the anomeric configuration of the arabinofuranose residue. In Bifidobacterium longum subsp. longum (strain ATCC 15707 / DSM 20219 / JCM 1217 / NCTC 11818 / E194b), this protein is Beta-L-arabinobiosidase (hypBA2).